We begin with the raw amino-acid sequence, 525 residues long: Retinoblastoma-binding-like protein E (525 aa).

5 WD repeats span residues 25 to 66 (PKNI…IVRT), 69 to 108 (HHTGCVNSISWSRNGKKLLTASNDGSLVLWDLATSKILYS), 222 to 261 (SSNTTVKQIEFSRNHRFMLVSSSDKVLRLISLESTNLYQQ), 267 to 312 (DSVN…KDLE), and 313 to 352 (GPKEGLVDVVWHPLRPIIVSISFTGVIYVWTAYFEENWSS). 2 disordered regions span residues 371–398 (DEFDAKDSDNENQEVNNNNNNNIGRNPY) and 462–525 (EKYQ…KKRK). Low complexity predominate over residues 383–392 (QEVNNNNNNN). Basic and acidic residues predominate over residues 462–471 (EKYQKDKEDS). Low complexity predominate over residues 472 to 500 (SSTTSNSTISSSSSPSPSSSSTTTTTTTS). Over residues 501-525 (QKKDETQKKEKSTKKERNSDSKKRK) the composition is skewed to basic and acidic residues.

It localises to the nucleus. Its function is as follows. Involved in mono-, di- and trimethylation at 'Lys-4' of histone H3. Histone H3 'Lys-4' methylation represents a specific tag for epigenetic transcriptional activation. The polypeptide is Retinoblastoma-binding-like protein E (Dictyostelium discoideum (Social amoeba)).